The chain runs to 78 residues: Large ribosomal subunit protein bL28 (78 aa).

Positions 1 to 23 (MSRVCQVSGKRVQTGNNVSHANN) are disordered. Positions 11–22 (RVQTGNNVSHAN) are enriched in polar residues.

Belongs to the bacterial ribosomal protein bL28 family.

This Stenotrophomonas maltophilia (strain R551-3) protein is Large ribosomal subunit protein bL28.